A 342-amino-acid chain; its full sequence is Ribosomal RNA small subunit methyltransferase C (342 aa).

This sequence belongs to the methyltransferase superfamily. RsmC family. Monomer.

It is found in the cytoplasm. The enzyme catalyses guanosine(1207) in 16S rRNA + S-adenosyl-L-methionine = N(2)-methylguanosine(1207) in 16S rRNA + S-adenosyl-L-homocysteine + H(+). Specifically methylates the guanine in position 1207 of 16S rRNA in the 30S particle. This chain is Ribosomal RNA small subunit methyltransferase C, found in Hahella chejuensis (strain KCTC 2396).